Reading from the N-terminus, the 580-residue chain is Arginine--tRNA ligase (580 aa).

The 'HIGH' region signature appears at 137 to 147 (ANPTGPLHIGH).

Belongs to the class-I aminoacyl-tRNA synthetase family. As to quaternary structure, monomer.

Its subcellular location is the cytoplasm. The enzyme catalyses tRNA(Arg) + L-arginine + ATP = L-arginyl-tRNA(Arg) + AMP + diphosphate. This Anaplasma phagocytophilum (strain HZ) protein is Arginine--tRNA ligase.